The chain runs to 404 residues: 4-hydroxy-3-methylbut-2-enyl diphosphate reductase (404 aa).

Position 66 (cysteine 66) interacts with [4Fe-4S] cluster. Histidine 96 lines the (2E)-4-hydroxy-3-methylbut-2-enyl diphosphate pocket. A dimethylallyl diphosphate-binding site is contributed by histidine 96. Histidine 96 lines the isopentenyl diphosphate pocket. A [4Fe-4S] cluster-binding site is contributed by cysteine 157. Histidine 185 is a (2E)-4-hydroxy-3-methylbut-2-enyl diphosphate binding site. Dimethylallyl diphosphate is bound at residue histidine 185. Histidine 185 contributes to the isopentenyl diphosphate binding site. Glutamate 187 acts as the Proton donor in catalysis. Threonine 250 is a (2E)-4-hydroxy-3-methylbut-2-enyl diphosphate binding site. [4Fe-4S] cluster is bound at residue cysteine 288. (2E)-4-hydroxy-3-methylbut-2-enyl diphosphate-binding residues include serine 317, serine 318, asparagine 319, and serine 380. Positions 317, 318, 319, and 380 each coordinate dimethylallyl diphosphate. Isopentenyl diphosphate contacts are provided by serine 317, serine 318, asparagine 319, and serine 380.

This sequence belongs to the IspH family. It depends on [4Fe-4S] cluster as a cofactor.

It catalyses the reaction isopentenyl diphosphate + 2 oxidized [2Fe-2S]-[ferredoxin] + H2O = (2E)-4-hydroxy-3-methylbut-2-enyl diphosphate + 2 reduced [2Fe-2S]-[ferredoxin] + 2 H(+). It carries out the reaction dimethylallyl diphosphate + 2 oxidized [2Fe-2S]-[ferredoxin] + H2O = (2E)-4-hydroxy-3-methylbut-2-enyl diphosphate + 2 reduced [2Fe-2S]-[ferredoxin] + 2 H(+). It functions in the pathway isoprenoid biosynthesis; dimethylallyl diphosphate biosynthesis; dimethylallyl diphosphate from (2E)-4-hydroxy-3-methylbutenyl diphosphate: step 1/1. It participates in isoprenoid biosynthesis; isopentenyl diphosphate biosynthesis via DXP pathway; isopentenyl diphosphate from 1-deoxy-D-xylulose 5-phosphate: step 6/6. In terms of biological role, catalyzes the conversion of 1-hydroxy-2-methyl-2-(E)-butenyl 4-diphosphate (HMBPP) into a mixture of isopentenyl diphosphate (IPP) and dimethylallyl diphosphate (DMAPP). Acts in the terminal step of the DOXP/MEP pathway for isoprenoid precursor biosynthesis. The polypeptide is 4-hydroxy-3-methylbut-2-enyl diphosphate reductase (Prochlorococcus marinus (strain MIT 9211)).